We begin with the raw amino-acid sequence, 84 residues long: Small ribosomal subunit protein uS17 (84 aa).

The protein belongs to the universal ribosomal protein uS17 family. In terms of assembly, part of the 30S ribosomal subunit.

One of the primary rRNA binding proteins, it binds specifically to the 5'-end of 16S ribosomal RNA. This Photobacterium profundum (strain SS9) protein is Small ribosomal subunit protein uS17.